The primary structure comprises 250 residues: Probable transcriptional regulatory protein Plut_1643 (250 aa).

This sequence belongs to the TACO1 family.

The protein resides in the cytoplasm. In Chlorobium luteolum (strain DSM 273 / BCRC 81028 / 2530) (Pelodictyon luteolum), this protein is Probable transcriptional regulatory protein Plut_1643.